A 635-amino-acid polypeptide reads, in one-letter code: Biosynthetic arginine decarboxylase (635 aa).

Lys-101 carries the post-translational modification N6-(pyridoxal phosphate)lysine. Substrate is bound at residue 284–294 (VDVGGGLGVDY).

It belongs to the Orn/Lys/Arg decarboxylase class-II family. SpeA subfamily. Requires Mg(2+) as cofactor. Pyridoxal 5'-phosphate serves as cofactor.

It carries out the reaction L-arginine + H(+) = agmatine + CO2. Its pathway is amine and polyamine biosynthesis; agmatine biosynthesis; agmatine from L-arginine: step 1/1. Its function is as follows. Catalyzes the biosynthesis of agmatine from arginine. This is Biosynthetic arginine decarboxylase from Tolumonas auensis (strain DSM 9187 / NBRC 110442 / TA 4).